The primary structure comprises 56 residues: MARKRQDVRPIVKLKSTAGTGFTYVTRKNRRNDPDRIVLKKYDPIIRRHTEFREER.

It belongs to the bacterial ribosomal protein bL33 family.

In Tropheryma whipplei (strain TW08/27) (Whipple's bacillus), this protein is Large ribosomal subunit protein bL33.